The sequence spans 246 residues: tRNA pseudouridine synthase A (246 aa).

The active-site Nucleophile is aspartate 52. Tyrosine 111 is a binding site for substrate.

This sequence belongs to the tRNA pseudouridine synthase TruA family. As to quaternary structure, homodimer.

The enzyme catalyses uridine(38/39/40) in tRNA = pseudouridine(38/39/40) in tRNA. Functionally, formation of pseudouridine at positions 38, 39 and 40 in the anticodon stem and loop of transfer RNAs. The polypeptide is tRNA pseudouridine synthase A (Ehrlichia ruminantium (strain Gardel)).